A 147-amino-acid chain; its full sequence is Hemoglobin subunit beta (147 aa).

The 145-residue stretch at 3–147 (HWTAEEKQII…VAHALARKYH (145 aa)) folds into the Globin domain. His64 and His93 together coordinate heme b.

Heterotetramer of two alpha (or alpha-D) and two beta chains. Red blood cells.

Functionally, involved in oxygen transport from the lung to the various peripheral tissues. The beta chain is a component of adult hemoglobin A and D. This chain is Hemoglobin subunit beta, found in Aythya fuligula (Tufted duck).